A 446-amino-acid chain; its full sequence is Glutamine synthetase (446 aa).

Residues arginine 15–glycine 102 enclose the GS beta-grasp domain. The region spanning serine 109–leucine 446 is the GS catalytic domain. Residues glutamate 132 and glutamate 134 each contribute to the Mg(2+) site. Glutamate 184 serves as a coordination point for ATP. 2 residues coordinate Mg(2+): glutamate 189 and glutamate 196. Residue glycine 241 coordinates L-glutamate. A Mg(2+)-binding site is contributed by histidine 245. Residues histidine 247–serine 249 and serine 249 contribute to the ATP site. Residues arginine 298, glutamate 304, and arginine 316 each contribute to the L-glutamate site. The ATP site is built by arginine 316 and arginine 321. Position 336 (glutamate 336) interacts with Mg(2+). Arginine 338 contributes to the L-glutamate binding site. Lysine 363 is covalently cross-linked (Isoglutamyl lysine isopeptide (Lys-Gln) (interchain with Q-Cter in protein Pup)).

It belongs to the glutamine synthetase family. In terms of assembly, oligomer of 12 subunits arranged in the form of two hexagons. In its feedback-inhibited form, interacts with TnrA in order to block its DNA-binding activity. The cofactor is Mg(2+).

It localises to the cytoplasm. It carries out the reaction L-glutamate + NH4(+) + ATP = L-glutamine + ADP + phosphate + H(+). Its activity is regulated as follows. Inhibited by glutamine. In terms of biological role, glutamine synthetase (GS) is an unusual multitasking protein that functions as an enzyme, a transcription coregulator, and a chaperone in ammonium assimilation and in the regulation of genes involved in nitrogen metabolism. It catalyzes the ATP-dependent biosynthesis of glutamine from glutamate and ammonia. Feedback-inhibited GlnA also interacts with and regulates the activity of the transcriptional regulator TnrA. During nitrogen limitation, TnrA is in its DNA-binding active state and turns on the transcription of genes required for nitrogen assimilation. Under conditions of nitrogen excess, feedback-inhibited GlnA forms a stable complex with TnrA, which inhibits its DNA-binding activity. In contrast, feedback-inhibited GlnA acts as a chaperone to stabilize the DNA-binding activity of GlnR, which represses the transcription of nitrogen assimilation genes. This chain is Glutamine synthetase, found in Mycolicibacterium smegmatis (strain ATCC 700084 / mc(2)155) (Mycobacterium smegmatis).